A 417-amino-acid chain; its full sequence is Phosphoglycerate kinase 1 (417 aa).

An N-acetylserine modification is found at serine 2. Residues serine 2 and serine 4 each carry the phosphoserine modification. N6-succinyllysine is present on lysine 6. An N6-acetyllysine modification is found at lysine 11. The (2R)-3-phosphoglycerate site is built by valine 23, aspartate 24, phenylalanine 25, asparagine 26, glutamine 38, and arginine 39. The mitochondrial targeting region exposed following cis-trans isomerization by PIN1 and recognized by the TOM complex for mitochondrial translocation of the protein stretch occupies residues glutamine 38–alanine 43. N6-acetyllysine; alternate is present on lysine 48. At lysine 48 the chain carries N6-succinyllysine; alternate. Residues serine 62, histidine 63, glycine 65, and arginine 66 each contribute to the (2R)-3-phosphoglycerate site. Lysine 75 bears the N6-acetyllysine mark. Position 76 is a phosphotyrosine (tyrosine 76). Lysine 86 and lysine 91 each carry N6-acetyllysine. Residue lysine 97 is modified to N6-acetyllysine; alternate. Lysine 97 is modified (N6-(2-hydroxyisobutyryl)lysine; alternate). Leucine 122 and arginine 123 together coordinate (2R)-3-phosphoglycerate. Lysine 131 carries the N6-acetyllysine; alternate modification. An N6-malonyllysine; alternate modification is found at lysine 131. The residue at position 146 (lysine 146) is an N6-acetyllysine. Histidine 170 and arginine 171 together coordinate (2R)-3-phosphoglycerate. Lysine 191 carries the N6-succinyllysine modification. The residue at position 196 (tyrosine 196) is a Phosphotyrosine. Lysine 199 carries the N6-acetyllysine modification. Serine 203 carries the post-translational modification Phosphoserine. Residue glycine 214 coordinates ADP. Glycine 214 contributes to the CDP binding site. AMP is bound by residues alanine 215 and lysine 216. Alanine 215 is an ATP binding site. Residue alanine 215 coordinates Mg(2+). Lysine 216 is subject to N6-(2-hydroxyisobutyryl)lysine. Positions 218 and 219 each coordinate Mg(2+). Aspartate 219 contacts CDP. Lysine 220 is a binding site for AMP. Lysine 220 lines the ATP pocket. Position 220 is an N6-(2-hydroxyisobutyryl)lysine (lysine 220). Residue glycine 238 coordinates ADP. Glycine 238 contributes to the CDP binding site. Position 239 (glycine 239) interacts with AMP. Residue glycine 239 coordinates ATP. N6-acetyllysine occurs at positions 267 and 291. Residue glycine 313 participates in AMP binding. Residue glycine 313 coordinates ATP. The residue at position 323 (lysine 323) is an N6-(2-hydroxyisobutyryl)lysine. Residues glycine 338, valine 340, and phenylalanine 343 each coordinate CDP. Residue phenylalanine 343 coordinates ADP. AMP is bound at residue glutamate 344. Glutamate 344 provides a ligand contact to ATP. Lysine 361 carries the post-translational modification N6-acetyllysine. 2 residues coordinate ATP: aspartate 375 and threonine 376. Aspartate 375 serves as a coordination point for Mg(2+).

It belongs to the phosphoglycerate kinase family. In terms of assembly, monomer. Interacts with kinase MAPK1/ERK2; the interaction is direct, occurs under hypoxic conditions, and promotes its interaction with PIN1. Interacts with peptidyl-prolyl cis-trans isomerase PIN1; the interaction is direct, occurs under hypoxic conditions, and targets the protein to the mitochondrion by promoting interactions with the TOM complex. Interacts with mitochondrial circRNA mcPGK1 (via its 2nd stem-loop); the interaction is direct and targets the protein to the mitochondrion by promoting interactions with the TOM complex. Interacts with pyruvate dehydrogenase kinase PDK1; the interaction is direct, occurs under hypoxic conditions and leads to PDK1-mediated inhibition of pyruvate dehydrogenase complex activity. Mg(2+) is required as a cofactor. Post-translationally, phosphorylated at Ser-203 by MAPK1/ERK2 under hypoxic conditions, which promotes its mitochondrial targeting. In terms of tissue distribution, testis, lung, brain, skeletal muscle, liver, intestine, and kidney (at protein level).

Its subcellular location is the cytoplasm. It is found in the cytosol. The protein localises to the mitochondrion matrix. It carries out the reaction (2R)-3-phosphoglycerate + ATP = (2R)-3-phospho-glyceroyl phosphate + ADP. The enzyme catalyses L-seryl-[protein] + ATP = O-phospho-L-seryl-[protein] + ADP + H(+). It participates in carbohydrate degradation; glycolysis; pyruvate from D-glyceraldehyde 3-phosphate: step 2/5. Its function is as follows. Catalyzes one of the two ATP producing reactions in the glycolytic pathway via the reversible conversion of 1,3-diphosphoglycerate to 3-phosphoglycerate. Both L- and D- forms of purine and pyrimidine nucleotides can be used as substrates, but the activity is much lower on pyrimidines. In addition to its role as a glycolytic enzyme, it seems that PGK-1 acts as a polymerase alpha cofactor protein (primer recognition protein). Acts as a protein kinase when localized to the mitochondrion where it phosphorylates pyruvate dehydrogenase kinase PDK1 to inhibit pyruvate dehydrogenase complex activity and suppress the formation of acetyl-coenzyme A from pyruvate, and consequently inhibit oxidative phosphorylation and promote glycolysis. May play a role in sperm motility. The polypeptide is Phosphoglycerate kinase 1 (Pgk1) (Mus musculus (Mouse)).